The primary structure comprises 175 residues: Photosynthetic NDH subunit of subcomplex B 4, chloroplastic (175 aa).

The N-terminal 24 residues, 1-24 (MAEAFTSFTFTNLHIPSSYNHSPK), are a transit peptide targeting the chloroplast. The chain crosses the membrane as a helical span at residues 95–111 (VYMFYIMFTCWGCLYFG).

In terms of assembly, part of the chloroplast NDH complex, composed of a mixture of chloroplast and nucleus encoded subunits. Component of the NDH subcomplex B, at least composed of PnsB1, PnsB2, PnsB3, PnsB4 and PnsB5.

It localises to the plastid. It is found in the chloroplast thylakoid membrane. In terms of biological role, NDH shuttles electrons from NAD(P)H:plastoquinone, via FMN and iron-sulfur (Fe-S) centers, to quinones in the photosynthetic chain and possibly in a chloroplast respiratory chain. The immediate electron acceptor for the enzyme in this species is believed to be plastoquinone. Couples the redox reaction to proton translocation, and thus conserves the redox energy in a proton gradient. The chain is Photosynthetic NDH subunit of subcomplex B 4, chloroplastic from Arabidopsis thaliana (Mouse-ear cress).